The following is a 448-amino-acid chain: Glutamate--tRNA ligase 1 (448 aa).

The 'HIGH' region signature appears at 10–20 (PSPTGMLHVGN). The 'KMSKS' region motif lies at 240–244 (KISKR). Lys243 provides a ligand contact to ATP.

Belongs to the class-I aminoacyl-tRNA synthetase family. Glutamate--tRNA ligase type 1 subfamily. In terms of assembly, monomer.

Its subcellular location is the cytoplasm. It catalyses the reaction tRNA(Glu) + L-glutamate + ATP = L-glutamyl-tRNA(Glu) + AMP + diphosphate. In terms of biological role, catalyzes the attachment of glutamate to tRNA(Glu) in a two-step reaction: glutamate is first activated by ATP to form Glu-AMP and then transferred to the acceptor end of tRNA(Glu). The protein is Glutamate--tRNA ligase 1 of Rickettsia typhi (strain ATCC VR-144 / Wilmington).